Here is an 89-residue protein sequence, read N- to C-terminus: Small ribosomal subunit protein uS15 (89 aa).

Belongs to the universal ribosomal protein uS15 family. Part of the 30S ribosomal subunit. Forms a bridge to the 50S subunit in the 70S ribosome, contacting the 23S rRNA.

Its function is as follows. One of the primary rRNA binding proteins, it binds directly to 16S rRNA where it helps nucleate assembly of the platform of the 30S subunit by binding and bridging several RNA helices of the 16S rRNA. In terms of biological role, forms an intersubunit bridge (bridge B4) with the 23S rRNA of the 50S subunit in the ribosome. This chain is Small ribosomal subunit protein uS15, found in Chlamydia felis (strain Fe/C-56) (Chlamydophila felis).